The following is a 381-amino-acid chain: Cytochrome b (381 aa).

4 helical membrane-spanning segments follow: residues 34 to 54 (FGSL…FLAM), 78 to 99 (WLIR…YLHI), 114 to 134 (WNIG…GYVL), and 179 to 199 (FFAF…IHLL). His-84 and His-98 together coordinate heme b. 2 residues coordinate heme b: His-183 and His-197. His-202 lines the a ubiquinone pocket. Helical transmembrane passes span 227 to 247 (YKDL…ALFM), 289 to 309 (LGGV…PLLH), 321 to 341 (LTQI…WIGG), and 348 to 368 (FITV…IIMP).

The protein belongs to the cytochrome b family. As to quaternary structure, the cytochrome bc1 complex contains 3 respiratory subunits (MT-CYB, CYC1 and UQCRFS1), 2 core proteins (UQCRC1 and UQCRC2) and probably 6 low-molecular weight proteins. The cofactor is heme b.

It is found in the mitochondrion inner membrane. In terms of biological role, component of the ubiquinol-cytochrome c reductase complex (complex III or cytochrome b-c1 complex) that is part of the mitochondrial respiratory chain. The b-c1 complex mediates electron transfer from ubiquinol to cytochrome c. Contributes to the generation of a proton gradient across the mitochondrial membrane that is then used for ATP synthesis. The protein is Cytochrome b (mt-cyb) of Sphyrna tiburo vespertina (Pacific bonnethead shark).